Reading from the N-terminus, the 333-residue chain is Protein FanF (333 aa).

An N-terminal signal peptide occupies residues 1–22 (MKNKYNLLFFLFLLCYGDVALA).

Three disulfide bonds are present.

It is found in the fimbrium. Functionally, minor component of K99 fimbriae. Is not required for binding of K99 fimbriae to the ganglioside receptor. May play a role in initiation, elongation and flexibility of the fimbriae. The sequence is that of Protein FanF (fanF) from Escherichia coli.